The following is a 361-amino-acid chain: Large ribosomal subunit protein mL45 (361 aa).

Belongs to the mitochondrion-specific ribosomal protein mL45 family.

It localises to the mitochondrion. This is Large ribosomal subunit protein mL45 (mrpl-45) from Caenorhabditis briggsae.